Reading from the N-terminus, the 122-residue chain is Basic phospholipase A2 10 (122 aa).

7 cysteine pairs are disulfide-bonded: cysteine 26–cysteine 114, cysteine 28–cysteine 43, cysteine 42–cysteine 94, cysteine 48–cysteine 122, cysteine 49–cysteine 87, cysteine 56–cysteine 80, and cysteine 74–cysteine 85. Positions 27, 29, and 31 each coordinate Ca(2+). The active site involves histidine 46. A Ca(2+)-binding site is contributed by aspartate 47. Aspartate 88 is a catalytic residue.

Ca(2+) serves as cofactor. In terms of tissue distribution, expressed by the venom gland.

The protein resides in the secreted. It catalyses the reaction a 1,2-diacyl-sn-glycero-3-phosphocholine + H2O = a 1-acyl-sn-glycero-3-phosphocholine + a fatty acid + H(+). Its activity is regulated as follows. Inhibited by chemical modifications mediated by p-BPB, anhydrous acetic acid and NBSF. Snake venom phospholipase A2 (PLA2) that has a strong dose-dependent anticoagulant effect. In vivo, intramuscular and intervenal injection causes muscle necrosis. Induces moderate edema in the mouse foot pad. PLA2 catalyzes the calcium-dependent hydrolysis of the 2-acyl groups in 3-sn-phosphoglycerides. The polypeptide is Basic phospholipase A2 10 (Crotalus durissus cumanensis (South American rattlesnake)).